Here is a 750-residue protein sequence, read N- to C-terminus: Photosystem I P700 chlorophyll a apoprotein A1 (750 aa).

8 helical membrane-spanning segments follow: residues 70–93 (VFSAHFGQLSIIFLWLSGMYFHGA), 156–179 (LYCTAIGALVFAALMLFAGWFHYH), 195–219 (LNHHLAGLLGLGSLSWAGHQVHVSL), 291–309 (IAHHHLAIAILFLVAGHMY), 346–369 (WHAQLSLNLAMLGSSTIVVAHHMY), 385–411 (LSLFTHHMWIGGFLIVGAAAHAAIFMV), 433–455 (AIISHLNWACIFLGFHSFGLYIH), and 531–549 (FLVHHIHAFTIHVTVLILL). [4Fe-4S] cluster is bound by residues C573 and C582. 2 helical membrane passes run 589-610 (HVFLGLFWMYNAISVVIFHFSW) and 664-686 (LSAYGLFFLGAHFVWAFSLMFLF). H675 serves as a coordination point for chlorophyll a'. Chlorophyll a contacts are provided by M683 and Y691. W692 is a binding site for phylloquinone. A helical transmembrane segment spans residues 724–744 (AVGVTHYLLGGIATTWAFFLA).

Belongs to the PsaA/PsaB family. The PsaA/B heterodimer binds the P700 chlorophyll special pair and subsequent electron acceptors. PSI consists of a core antenna complex that captures photons, and an electron transfer chain that converts photonic excitation into a charge separation. The eukaryotic PSI reaction center is composed of at least 11 subunits. The cofactor is P700 is a chlorophyll a/chlorophyll a' dimer, A0 is one or more chlorophyll a, A1 is one or both phylloquinones and FX is a shared 4Fe-4S iron-sulfur center..

The protein localises to the plastid. Its subcellular location is the chloroplast thylakoid membrane. It carries out the reaction reduced [plastocyanin] + hnu + oxidized [2Fe-2S]-[ferredoxin] = oxidized [plastocyanin] + reduced [2Fe-2S]-[ferredoxin]. Functionally, psaA and PsaB bind P700, the primary electron donor of photosystem I (PSI), as well as the electron acceptors A0, A1 and FX. PSI is a plastocyanin-ferredoxin oxidoreductase, converting photonic excitation into a charge separation, which transfers an electron from the donor P700 chlorophyll pair to the spectroscopically characterized acceptors A0, A1, FX, FA and FB in turn. Oxidized P700 is reduced on the lumenal side of the thylakoid membrane by plastocyanin. The polypeptide is Photosystem I P700 chlorophyll a apoprotein A1 (Calycanthus floridus var. glaucus (Eastern sweetshrub)).